The chain runs to 201 residues: Superoxide dismutase [Mn/Fe] (201 aa).

Positions 27, 75, 161, and 165 each coordinate Fe(3+). Histidine 27, histidine 75, aspartate 161, and histidine 165 together coordinate Mn(2+).

Belongs to the iron/manganese superoxide dismutase family. In terms of assembly, homotetramer. Requires Mn(2+) as cofactor. Fe(3+) serves as cofactor.

The catalysed reaction is 2 superoxide + 2 H(+) = H2O2 + O2. Shows decreasing activity with increasing pH. Slightly inhibited by azide and fluoride at pH 7-8; the inhibition is drastically increased towards lower pH. Functionally, destroys superoxide anion radicals which are normally produced within the cells and which are toxic to biological systems. Catalyzes the dismutation of superoxide anion radicals into O2 and H2O2 by successive reduction and oxidation of the transition metal ion at the active site. The polypeptide is Superoxide dismutase [Mn/Fe] (sodA) (Propionibacterium freudenreichii subsp. shermanii).